We begin with the raw amino-acid sequence, 218 residues long: Glutathione S-transferase class-mu 26 kDa isozyme (218 aa).

The 83-residue stretch at 1–83 folds into the GST N-terminal domain; sequence MAPKFGYWKV…YIADKHNMLG (83 aa). Glutathione contacts are provided by residues 7–8, 41–45, 54–55, and 67–68; these read YW, WSNDK, NL, and QS. Residues 85-203 enclose the GST C-terminal domain; the sequence is CPKERAEISM…NSSRYIKWPL (119 aa). Y111 serves as a coordination point for substrate.

The protein belongs to the GST superfamily. Mu family. As to quaternary structure, homodimer. In terms of tissue distribution, tegument and in subtegumentary parenchymal cells. GST 26 may be actively excreted by adult worms.

It catalyses the reaction RX + glutathione = an S-substituted glutathione + a halide anion + H(+). Its function is as follows. Conjugation of reduced glutathione to a wide number of exogenous and endogenous hydrophobic electrophiles. GST isoenzymes appear to play a central role in the parasite detoxification system. Other functions are also suspected including a role in increasing the solubility of haematin in the parasite gut. This Schistosoma mansoni (Blood fluke) protein is Glutathione S-transferase class-mu 26 kDa isozyme.